A 427-amino-acid chain; its full sequence is Gamma-glutamyl phosphate reductase (427 aa).

Belongs to the gamma-glutamyl phosphate reductase family.

The protein resides in the cytoplasm. The catalysed reaction is L-glutamate 5-semialdehyde + phosphate + NADP(+) = L-glutamyl 5-phosphate + NADPH + H(+). It functions in the pathway amino-acid biosynthesis; L-proline biosynthesis; L-glutamate 5-semialdehyde from L-glutamate: step 2/2. Catalyzes the NADPH-dependent reduction of L-glutamate 5-phosphate into L-glutamate 5-semialdehyde and phosphate. The product spontaneously undergoes cyclization to form 1-pyrroline-5-carboxylate. The sequence is that of Gamma-glutamyl phosphate reductase from Anaeromyxobacter dehalogenans (strain 2CP-1 / ATCC BAA-258).